Reading from the N-terminus, the 94-residue chain is Large ribosomal subunit protein uL23 (94 aa).

Belongs to the universal ribosomal protein uL23 family. In terms of assembly, part of the 50S ribosomal subunit. Contacts protein L29, and trigger factor when it is bound to the ribosome.

Its function is as follows. One of the early assembly proteins it binds 23S rRNA. One of the proteins that surrounds the polypeptide exit tunnel on the outside of the ribosome. Forms the main docking site for trigger factor binding to the ribosome. This chain is Large ribosomal subunit protein uL23, found in Ligilactobacillus salivarius (strain UCC118) (Lactobacillus salivarius).